The primary structure comprises 315 residues: Gamma-hemolysin component C (315 aa).

A signal peptide spans 1–29; it reads MLKNKILATTLSVSLLAPLANPLLENAKA.

The protein belongs to the aerolysin family. In terms of assembly, toxicity requires sequential binding and synergistic association of a class S and a class F component which form heterooligomeric complexes. HlgC (class S) associates with HlgB (class F) thus forming an CB toxin.

Toxin that seems to act by forming pores in the membrane of the cell. Has a hemolytic and a leucotoxic activity. The chain is Gamma-hemolysin component C (hlgC) from Staphylococcus aureus (strain MRSA252).